A 323-amino-acid polypeptide reads, in one-letter code: tRNA dimethylallyltransferase (323 aa).

Position 12 to 19 (12 to 19 (GPTASGKT)) interacts with ATP. Substrate is bound at residue 14–19 (TASGKT). 2 interaction with substrate tRNA regions span residues 37 to 40 (DSAL) and 161 to 165 (QRLVR).

It belongs to the IPP transferase family. Monomer. The cofactor is Mg(2+).

The enzyme catalyses adenosine(37) in tRNA + dimethylallyl diphosphate = N(6)-dimethylallyladenosine(37) in tRNA + diphosphate. Its function is as follows. Catalyzes the transfer of a dimethylallyl group onto the adenine at position 37 in tRNAs that read codons beginning with uridine, leading to the formation of N6-(dimethylallyl)adenosine (i(6)A). The chain is tRNA dimethylallyltransferase from Azotobacter vinelandii (strain DJ / ATCC BAA-1303).